A 140-amino-acid polypeptide reads, in one-letter code: Ribosome-binding factor A (140 aa).

The segment at 121-140 (KTEQTSADDDADRLDSEDRS) is disordered.

It belongs to the RbfA family. As to quaternary structure, monomer. Binds 30S ribosomal subunits, but not 50S ribosomal subunits or 70S ribosomes.

It localises to the cytoplasm. One of several proteins that assist in the late maturation steps of the functional core of the 30S ribosomal subunit. Associates with free 30S ribosomal subunits (but not with 30S subunits that are part of 70S ribosomes or polysomes). Required for efficient processing of 16S rRNA. May interact with the 5'-terminal helix region of 16S rRNA. This Psychrobacter sp. (strain PRwf-1) protein is Ribosome-binding factor A.